The following is a 62-amino-acid chain: Snaclec aspercetin subunit alpha (62 aa).

Cysteine 2 and cysteine 13 are joined by a disulfide. The region spanning 9–62 (YEGHCYRFFHPPKDWADAERFCTEQAKGGALVSIQRFGEEDFVSNLITKNLQRG) is the C-type lectin domain.

The protein belongs to the snaclec family. As to quaternary structure, heterodimer; disulfide-linked. In terms of tissue distribution, expressed by the venom gland.

It is found in the secreted. Functionally, snaclec that binds to von Willebrand factor (VWF) and induces its interaction with GPIbalpha (GP1BA) (via the vWF A1 domain), resulting in platelet aggregation. Intravenous injection in mice induces a dose-dependent drop in platelet count (thrombocytopenia). Pretreatment by intravenous injection by this protein in mice potentiates the hemorrhagic lesion in the skin provoked by the metalloproteinase BaP1 intradermally injected. This result is not observed when both BaP1 and this protein are injected simultaneously. This is Snaclec aspercetin subunit alpha from Bothrops asper (Terciopelo).